The following is a 101-amino-acid chain: Small ribosomal subunit protein uS14 (101 aa).

It belongs to the universal ribosomal protein uS14 family. In terms of assembly, part of the 30S ribosomal subunit. Contacts proteins S3 and S10.

Binds 16S rRNA, required for the assembly of 30S particles and may also be responsible for determining the conformation of the 16S rRNA at the A site. This is Small ribosomal subunit protein uS14 from Brucella anthropi (strain ATCC 49188 / DSM 6882 / CCUG 24695 / JCM 21032 / LMG 3331 / NBRC 15819 / NCTC 12168 / Alc 37) (Ochrobactrum anthropi).